Reading from the N-terminus, the 227-residue chain is Cytidylate kinase (227 aa).

ATP is bound at residue 12–20 (GPSGSGKGT).

This sequence belongs to the cytidylate kinase family. Type 1 subfamily.

Its subcellular location is the cytoplasm. It catalyses the reaction CMP + ATP = CDP + ADP. The enzyme catalyses dCMP + ATP = dCDP + ADP. The protein is Cytidylate kinase of Nitrosococcus oceani (strain ATCC 19707 / BCRC 17464 / JCM 30415 / NCIMB 11848 / C-107).